The chain runs to 335 residues: Ornithine carbamoyltransferase (335 aa).

Carbamoyl phosphate-binding positions include 56–59 (STRT), Gln83, Arg107, and 134–137 (HPTQ). Residues Asn168, Asp232, and 236–237 (SM) contribute to the L-ornithine site. Residues 274–275 (CL) and Arg320 contribute to the carbamoyl phosphate site.

Belongs to the aspartate/ornithine carbamoyltransferase superfamily. OTCase family.

It is found in the cytoplasm. It carries out the reaction carbamoyl phosphate + L-ornithine = L-citrulline + phosphate + H(+). Its pathway is amino-acid biosynthesis; L-arginine biosynthesis; L-arginine from L-ornithine and carbamoyl phosphate: step 1/3. Reversibly catalyzes the transfer of the carbamoyl group from carbamoyl phosphate (CP) to the N(epsilon) atom of ornithine (ORN) to produce L-citrulline. In Yersinia pseudotuberculosis serotype I (strain IP32953), this protein is Ornithine carbamoyltransferase.